A 118-amino-acid chain; its full sequence is NADH-ubiquinone oxidoreductase chain 3 (118 aa).

A run of 3 helical transmembrane segments spans residues 7–27 (ICIS…VPFL), 62–82 (LVSI…PWAV), and 87–107 (IDLF…IGFL).

This sequence belongs to the complex I subunit 3 family.

Its subcellular location is the mitochondrion membrane. The enzyme catalyses a ubiquinone + NADH + 5 H(+)(in) = a ubiquinol + NAD(+) + 4 H(+)(out). Its function is as follows. Core subunit of the mitochondrial membrane respiratory chain NADH dehydrogenase (Complex I) that is believed to belong to the minimal assembly required for catalysis. Complex I functions in the transfer of electrons from NADH to the respiratory chain. The immediate electron acceptor for the enzyme is believed to be ubiquinone. The polypeptide is NADH-ubiquinone oxidoreductase chain 3 (ND3) (Oenothera berteroana (Bertero's evening primrose)).